We begin with the raw amino-acid sequence, 275 residues long: NAD(P)H dehydrogenase [quinone] 1 (275 aa).

FAD is bound by residues His13, 19 to 20, and Gln68; that span reads FN. Residue Ser83 is modified to Phosphoserine. 105-108 lines the FAD pocket; sequence LQWF. A substrate-binding site is contributed by 127 to 129; sequence AYT. Residues 149–152, Tyr157, and Arg202 each bind FAD; that span reads TTGG. The segment at 226–275 is important for apoenzyme conformational stability; sequence PSSLFDLNFQAGFLLKKEIEDEQKNNKYGLSVGHHLGKPIPTDNQIKARK. Lys252 is covalently cross-linked (Glycyl lysine isopeptide (Lys-Gly) (interchain with G-Cter in SUMO2)).

The protein belongs to the NAD(P)H dehydrogenase (quinone) family. Homodimer. Interacts with PDLIM4 isoform 2; this interaction stabilizes PDLIM4 isoform 2 in response to oxidative stress and protects it from ubiquitin-independent degradation by the core 20S proteasome. Interacts with TP73 (via SAM domain); this interaction is NADH-dependent, stabilizes TP73 in response to oxidative stress and protects it from ubiquitin-independent degradation by the 20S proteasome. Interacts with TP53; this interaction is NADH-dependent, stabilizes TP53 in response to oxidative stress and protects it from ubiquitin-independent degradation by the 20S proteasome. FAD serves as cofactor.

It localises to the cytoplasm. The protein localises to the cytosol. It carries out the reaction a quinone + NADH + H(+) = a quinol + NAD(+). The enzyme catalyses a quinone + NADPH + H(+) = a quinol + NADP(+). The catalysed reaction is ubiquinone-10 + NADH + H(+) = ubiquinol-10 + NAD(+). It catalyses the reaction menadione + NADH + H(+) = menadiol + NAD(+). Functionally, flavin-containing quinone reductase that catalyzes two-electron reduction of quinones to hydroquinones using either NADH or NADPH as electron donors. In a ping-pong kinetic mechanism, the electrons are sequentially transferred from NAD(P)H to flavin cofactor and then from reduced flavin to the quinone, bypassing the formation of semiquinone and reactive oxygen species. Regulates cellular redox state primarily through quinone detoxification. Reduces components of plasma membrane redox system such as coenzyme Q and vitamin quinones, producing antioxidant hydroquinone forms. In the process may function as superoxide scavenger to prevent hydroquinone oxidation and facilitate excretion. Alternatively, can activate quinones and their derivatives by generating redox reactive hydroquinones with DNA cross-linking antitumor potential. Acts as a gatekeeper of the core 20S proteasome known to degrade proteins with unstructured regions. Upon oxidative stress, interacts with tumor suppressors TP53 and TP73 in a NADH-dependent way and inhibits their ubiquitin-independent degradation by the 20S proteasome. This chain is NAD(P)H dehydrogenase [quinone] 1 (NQO1), found in Cavia porcellus (Guinea pig).